We begin with the raw amino-acid sequence, 666 residues long: DNA ligase (666 aa).

NAD(+)-binding positions include 34–38, 83–84, and Glu-114; these read DEEYD and SL. The N6-AMP-lysine intermediate role is filled by Lys-116. 4 residues coordinate NAD(+): Arg-137, Glu-174, Lys-290, and Lys-314. Zn(2+) is bound by residues Cys-408, Cys-411, Cys-424, and Cys-429. A BRCT domain is found at 584-666; it reads SIEGPLKGLT…LKMVKREHNG (83 aa).

This sequence belongs to the NAD-dependent DNA ligase family. LigA subfamily. It depends on Mg(2+) as a cofactor. Mn(2+) serves as cofactor.

The catalysed reaction is NAD(+) + (deoxyribonucleotide)n-3'-hydroxyl + 5'-phospho-(deoxyribonucleotide)m = (deoxyribonucleotide)n+m + AMP + beta-nicotinamide D-nucleotide.. DNA ligase that catalyzes the formation of phosphodiester linkages between 5'-phosphoryl and 3'-hydroxyl groups in double-stranded DNA using NAD as a coenzyme and as the energy source for the reaction. It is essential for DNA replication and repair of damaged DNA. This Coprothermobacter proteolyticus (strain ATCC 35245 / DSM 5265 / OCM 4 / BT) protein is DNA ligase.